Reading from the N-terminus, the 1060-residue chain is Outer capsid protein VP2 (1060 aa).

This sequence belongs to the orbivirus VP2 family.

The protein resides in the virion. The VP2 protein is one of the two proteins (with VP5) which constitute the virus particle outer capsid. It is the major target of the host immunogenic response. In Camelus dromedarius (Dromedary), this protein is Outer capsid protein VP2 (Segment-2).